Here is a 340-residue protein sequence, read N- to C-terminus: Uroporphyrinogen decarboxylase (340 aa).

Substrate-binding positions include 21–25 (RQAGR), phenylalanine 40, aspartate 71, tyrosine 146, serine 201, and histidine 316.

It belongs to the uroporphyrinogen decarboxylase family. In terms of assembly, homodimer.

The protein localises to the cytoplasm. The enzyme catalyses uroporphyrinogen III + 4 H(+) = coproporphyrinogen III + 4 CO2. It functions in the pathway porphyrin-containing compound metabolism; protoporphyrin-IX biosynthesis; coproporphyrinogen-III from 5-aminolevulinate: step 4/4. Catalyzes the decarboxylation of four acetate groups of uroporphyrinogen-III to yield coproporphyrinogen-III. The sequence is that of Uroporphyrinogen decarboxylase from Rickettsia bellii (strain RML369-C).